The primary structure comprises 203 residues: Endo-type membrane-bound lytic murein transglycosylase A (203 aa).

A signal peptide spans 1–15; sequence MKLRWFAFLVVLLAG. Cys-16 is lipidated: N-palmitoyl cysteine. Cys-16 carries the S-diacylglycerol cysteine lipid modification.

Belongs to the transglycosylase Slt family.

The protein localises to the cell outer membrane. The enzyme catalyses Endolytic cleavage of the (1-&gt;4)-beta-glycosidic linkage between N-acetylmuramic acid (MurNAc) and N-acetylglucosamine (GlcNAc) residues in peptidoglycan with concomitant formation of a 1,6-anhydrobond in the MurNAc residue.. In terms of biological role, murein-degrading enzyme. May play a role in recycling of muropeptides during cell elongation and/or cell division. Preferentially cleaves at a distance of more than two disaccharide units from the ends of the glycan chain. This chain is Endo-type membrane-bound lytic murein transglycosylase A, found in Escherichia fergusonii (strain ATCC 35469 / DSM 13698 / CCUG 18766 / IAM 14443 / JCM 21226 / LMG 7866 / NBRC 102419 / NCTC 12128 / CDC 0568-73).